The primary structure comprises 87 residues: Small ribosomal subunit protein uS17 (87 aa).

This sequence belongs to the universal ribosomal protein uS17 family. Part of the 30S ribosomal subunit.

In terms of biological role, one of the primary rRNA binding proteins, it binds specifically to the 5'-end of 16S ribosomal RNA. The sequence is that of Small ribosomal subunit protein uS17 from Bacillus thuringiensis (strain Al Hakam).